We begin with the raw amino-acid sequence, 392 residues long: Selenide, water dikinase 1 (392 aa).

Position 2 is an N-acetylserine (serine 2). Residue cysteine 31 is part of the active site. Residues lysine 32, 67–69 (GMD), aspartate 87, aspartate 110, and 161–164 (GGQT) each bind ATP. Aspartate 69 provides a ligand contact to Mg(2+). Mg(2+) is bound at residue aspartate 110. Mg(2+) is bound at residue aspartate 265.

This sequence belongs to the selenophosphate synthase 1 family. Class II subfamily. As to quaternary structure, homodimer. Mg(2+) is required as a cofactor.

The protein resides in the cell membrane. Its subcellular location is the nucleus membrane. The catalysed reaction is hydrogenselenide + ATP + H2O = selenophosphate + AMP + phosphate + 2 H(+). Its function is as follows. Synthesizes selenophosphate from selenide and ATP. The chain is Selenide, water dikinase 1 (Sephs1) from Mus musculus (Mouse).